A 406-amino-acid polypeptide reads, in one-letter code: MTFSVEQVRADFPVLNREVNGQPLVYLDSAASAQKPEAVIGAEAEFYRHGYAAVHRGIHTLSAEATARMEAVRQQAATFLNAGSAEEVVFVRGTTEGINLVANSWGNANVGAGDNIIISEMEHHANIVPWQMLCARVGAELRVIPLNPDGTLQLDVVPGLFDPRTRLLAITEVSNVLGTENPLAALIALAHQHGAKVLVDGAQAVMHHPVDVQALGCDFYVFSAHKLYGPTGIGVLYARSELLQTMAPWEGGGSMIATVSLTEGTTWNQAPWRFEAGTPNTGGIIGLGAALTYVSQLGLTQIAEYEQTLMRYALDALRAVPDLILYGPAQRKGVIAFNLGQHHAYDVGSFLDNYGIAVRTGHHCAMPLMARYQVPAMCRASLAMYNTTEEVDRLVAGLQRIRKLLG.

N6-(pyridoxal phosphate)lysine is present on lysine 226. The active-site Cysteine persulfide intermediate is cysteine 364.

It belongs to the class-V pyridoxal-phosphate-dependent aminotransferase family. Csd subfamily. In terms of assembly, homodimer. Interacts with SufE and the SufBCD complex composed of SufB, SufC and SufD. The interaction with SufE is required to mediate the direct transfer of the sulfur atom from the S-sulfanylcysteine. Pyridoxal 5'-phosphate serves as cofactor.

It localises to the cytoplasm. It catalyses the reaction (sulfur carrier)-H + L-cysteine = (sulfur carrier)-SH + L-alanine. The catalysed reaction is L-selenocysteine + AH2 = hydrogenselenide + L-alanine + A + H(+). It participates in cofactor biosynthesis; iron-sulfur cluster biosynthesis. Its function is as follows. Cysteine desulfurases mobilize the sulfur from L-cysteine to yield L-alanine, an essential step in sulfur metabolism for biosynthesis of a variety of sulfur-containing biomolecules. Component of the suf operon, which is activated and required under specific conditions such as oxidative stress and iron limitation. Acts as a potent selenocysteine lyase in vitro, that mobilizes selenium from L-selenocysteine. Selenocysteine lyase activity is however unsure in vivo. The sequence is that of Cysteine desulfurase from Klebsiella pneumoniae subsp. pneumoniae (strain ATCC 700721 / MGH 78578).